We begin with the raw amino-acid sequence, 384 residues long: tRNA 2-selenouridine synthase (384 aa).

Residues 15–138 (FVAGKPLIDL…MRQYLIGVIE (124 aa)) form the Rhodanese domain. Catalysis depends on Cys-98, which acts as the S-selanylcysteine intermediate.

It belongs to the SelU family. In terms of assembly, monomer.

It catalyses the reaction 5-methylaminomethyl-2-thiouridine(34) in tRNA + selenophosphate + (2E)-geranyl diphosphate + H2O + H(+) = 5-methylaminomethyl-2-selenouridine(34) in tRNA + (2E)-thiogeraniol + phosphate + diphosphate. The enzyme catalyses 5-methylaminomethyl-2-thiouridine(34) in tRNA + (2E)-geranyl diphosphate = 5-methylaminomethyl-S-(2E)-geranyl-thiouridine(34) in tRNA + diphosphate. The catalysed reaction is 5-methylaminomethyl-S-(2E)-geranyl-thiouridine(34) in tRNA + selenophosphate + H(+) = 5-methylaminomethyl-2-(Se-phospho)selenouridine(34) in tRNA + (2E)-thiogeraniol. It carries out the reaction 5-methylaminomethyl-2-(Se-phospho)selenouridine(34) in tRNA + H2O = 5-methylaminomethyl-2-selenouridine(34) in tRNA + phosphate. Functionally, involved in the post-transcriptional modification of the uridine at the wobble position (U34) of tRNA(Lys), tRNA(Glu) and tRNA(Gln). Catalyzes the conversion of 2-thiouridine (S2U-RNA) to 2-selenouridine (Se2U-RNA). Acts in a two-step process involving geranylation of 2-thiouridine (S2U) to S-geranyl-2-thiouridine (geS2U) and subsequent selenation of the latter derivative to 2-selenouridine (Se2U) in the tRNA chain. The protein is tRNA 2-selenouridine synthase of Shewanella sp. (strain MR-4).